Here is a 291-residue protein sequence, read N- to C-terminus: 4-hydroxy-tetrahydrodipicolinate synthase (291 aa).

T47 provides a ligand contact to pyruvate. Y134 functions as the Proton donor/acceptor in the catalytic mechanism. K162 functions as the Schiff-base intermediate with substrate in the catalytic mechanism. Position 205 (I205) interacts with pyruvate.

It belongs to the DapA family. Homotetramer; dimer of dimers.

It localises to the cytoplasm. It catalyses the reaction L-aspartate 4-semialdehyde + pyruvate = (2S,4S)-4-hydroxy-2,3,4,5-tetrahydrodipicolinate + H2O + H(+). It participates in amino-acid biosynthesis; L-lysine biosynthesis via DAP pathway; (S)-tetrahydrodipicolinate from L-aspartate: step 3/4. Functionally, catalyzes the condensation of (S)-aspartate-beta-semialdehyde [(S)-ASA] and pyruvate to 4-hydroxy-tetrahydrodipicolinate (HTPA). The protein is 4-hydroxy-tetrahydrodipicolinate synthase of Methanosphaerula palustris (strain ATCC BAA-1556 / DSM 19958 / E1-9c).